The following is an 81-amino-acid chain: Photosystem I iron-sulfur center (81 aa).

4Fe-4S ferredoxin-type domains are found at residues 2–31 and 39–68; these read AHAV…MIPW and IASA…VRVY. 8 residues coordinate [4Fe-4S] cluster: Cys11, Cys14, Cys17, Cys21, Cys48, Cys51, Cys54, and Cys58.

As to quaternary structure, the eukaryotic PSI reaction center is composed of at least 11 subunits. [4Fe-4S] cluster serves as cofactor.

The protein localises to the plastid. Its subcellular location is the chloroplast thylakoid membrane. The enzyme catalyses reduced [plastocyanin] + hnu + oxidized [2Fe-2S]-[ferredoxin] = oxidized [plastocyanin] + reduced [2Fe-2S]-[ferredoxin]. In terms of biological role, apoprotein for the two 4Fe-4S centers FA and FB of photosystem I (PSI); essential for photochemical activity. FB is the terminal electron acceptor of PSI, donating electrons to ferredoxin. The C-terminus interacts with PsaA/B/D and helps assemble the protein into the PSI complex. Required for binding of PsaD and PsaE to PSI. PSI is a plastocyanin-ferredoxin oxidoreductase, converting photonic excitation into a charge separation, which transfers an electron from the donor P700 chlorophyll pair to the spectroscopically characterized acceptors A0, A1, FX, FA and FB in turn. The chain is Photosystem I iron-sulfur center from Marchantia polymorpha (Common liverwort).